A 68-amino-acid polypeptide reads, in one-letter code: Conotoxin mr3g (68 aa).

Positions 1–19 are cleaved as a signal peptide; sequence MSKLGVLLTICLLLFALTA. Positions 20–51 are excised as a propeptide; the sequence is VPLDGDQPADRPAERMQDDISSERHPMFDAVR. Cystine bridges form between Cys53–Cys67, Cys54–Cys63, and Cys59–Cys66. 4-hydroxyproline occurs at positions 55 and 65. Cysteine amide is present on Cys67.

As to expression, expressed by the venom duct.

The protein localises to the secreted. In terms of biological role, intracranially injection into mice does not elicit symptoms. This is Conotoxin mr3g from Conus marmoreus (Marble cone).